Here is a 668-residue protein sequence, read N- to C-terminus: Transketolase 2 (668 aa).

His26 provides a ligand contact to substrate. Thiamine diphosphate is bound by residues His66 and 114 to 116 (GPL). Asp155 is a binding site for Mg(2+). Residues Gly156 and Asn185 each contribute to the thiamine diphosphate site. Mg(2+) contacts are provided by Asn185 and Ile187. The substrate site is built by His261, Arg358, and Ser385. His261 serves as a coordination point for thiamine diphosphate. Residue Glu413 is the Proton donor of the active site. Phe439 is a thiamine diphosphate binding site. His463, Asp471, and Arg522 together coordinate substrate.

Belongs to the transketolase family. As to quaternary structure, homodimer. Mg(2+) serves as cofactor. The cofactor is Ca(2+). It depends on Mn(2+) as a cofactor. Requires Co(2+) as cofactor. Thiamine diphosphate is required as a cofactor.

It catalyses the reaction D-sedoheptulose 7-phosphate + D-glyceraldehyde 3-phosphate = aldehydo-D-ribose 5-phosphate + D-xylulose 5-phosphate. Its function is as follows. Catalyzes the transfer of a two-carbon ketol group from a ketose donor to an aldose acceptor, via a covalent intermediate with the cofactor thiamine pyrophosphate. This is Transketolase 2 (tktB) from Pasteurella multocida (strain Pm70).